The primary structure comprises 1738 residues: Sodium leak channel NALCN (1738 aa).

Residues 1–36 (MLKRKQSSRVEAQPVTDFGPDESLSDNADILWINKP) are Cytoplasmic-facing. Residues 37–57 (WVHSLLRICAIISVISVCMNT) form a helical membrane-spanning segment. Over 58–65 (PMTFEHYP) the chain is Extracellular. A helical membrane pass occupies residues 66-90 (PLQYVTFTLDTLLMFLYTAEMIAKM). The Cytoplasmic portion of the chain corresponds to 91–106 (HIRGIVKGDSSYVKDR). The chain crosses the membrane as a helical span at residues 107–129 (WCVFDGFMVFCLWVSLVLQVFEI). At 130–137 (ADIVDQMS) the chain is on the extracellular side. The helical; Voltage-sensor transmembrane segment at 138–158 (PWGMLRIPRPLIMIRAFRIYF) threads the bilayer. Topologically, residues 159–173 (RFELPRTRITNILKR) are cytoplasmic. A helical transmembrane segment spans residues 174-199 (SGEQIWSVSIFLLFFLLLYGILGVQM). Residues 200–269 (FGTFTYHCVV…YSGFNEIGTS (70 aa)) are Extracellular-facing. Disulfide bonds link Cys207/Cys239 and Cys229/Cys245. 2 N-linked (GlcNAc...) asparagine glycosylation sites follow: Asn210 and Asn216. Residues 270 to 289 (IFTVYEAASQEGWVFLMYRA) constitute an intramembrane region (pore-forming). Residues 290–294 (IDSFP) lie on the Extracellular side of the membrane. A helical membrane pass occupies residues 295–322 (RWRSYFYFITLIFFLAWLVKNVFIAVII). Topologically, residues 323–382 (ETFAEIRVQFQQMWGSRSSTTSTATTQMFHEDAAGGWQLVAVDVNKPQGRAPACLQKMMR) are cytoplasmic. The helical transmembrane segment at 383–403 (SSVFHMFILSMVTVDVIVAAS) threads the bilayer. Residues 404–416 (NYYKGENFRRQYD) are Extracellular-facing. A helical transmembrane segment spans residues 417–439 (EFYLAEVAFTVLFDLEALLKIWC). At 440–447 (LGFTGYIS) the chain is on the cytoplasmic side. A helical membrane pass occupies residues 448-468 (SSLHKFELLLVIGTTLHVYPD). Residues 469–472 (LYHS) lie on the Extracellular side of the membrane. Residues 473–492 (QFTYFQVLRVVRLIKISPAL) traverse the membrane as a helical; Voltage-sensor segment. The Cytoplasmic portion of the chain corresponds to 493 to 502 (EDFVYKIFGP). The chain crosses the membrane as a helical span at residues 503-530 (GKKLGSLVVFTASLLIVMSAISLQMFCF). Over 531 to 543 (VEELDRFTTFPRA) the chain is Extracellular. An intramembrane region (pore-forming) is located at residues 544–563 (FMSMFQILTQEGWVDVMDQT). Residues 564 to 569 (LNAVGH) are Extracellular-facing. A helical transmembrane segment spans residues 570–599 (MWAPVVAIYFILYHLFATLILLSLFVAVIL). The Cytoplasmic portion of the chain corresponds to 600–886 (DNLELDEDLK…QLYDLLGLVT (287 aa)). Residues 762–785 (QERRSLRHGSNSQRISRGKSLETL) are disordered. The stretch at 795 to 830 (YRNAQREDSEIKMIQEKKEQAEMKRKVQEEELRENH) forms a coiled coil. The helical transmembrane segment at 887–906 (YLDWVMIIVTICSCISMMFE) threads the bilayer. Residues 907 to 915 (SPFRRVMHA) are Extracellular-facing. The helical transmembrane segment at 916–939 (PTLQIAEYVFVIFMSIELNLKIMA) threads the bilayer. Over 940–947 (DGLFFTPT) the chain is Cytoplasmic. Residues 948 to 972 (AVIRDFGGVMDIFIYLVSLIFLCWM) traverse the membrane as a helical segment. The Extracellular segment spans residues 973–980 (PQNVPAES). A helical; Voltage-sensor membrane pass occupies residues 981–1003 (GAQLLMVLRCLRPLRIFKLVPQM). Residues 1004–1015 (RKVVRELFSGFK) are Cytoplasmic-facing. The helical transmembrane segment at 1016–1039 (EIFLVSILLLTLMLVFASFGVQLF) threads the bilayer. Residues 1040–1104 (AGKLAKCNDP…NFNFDNVGNA (65 aa)) lie on the Extracellular side of the membrane. A disulfide bridge links Cys1046 with Cys1057. An N-linked (GlcNAc...) asparagine glycan is attached at Asn1064. Positions 1105 to 1124 (MLALFEVLSLKGWVEVRDVI) form an intramembrane region, pore-forming. The Extracellular portion of the chain corresponds to 1125–1129 (IHRVG). Residues 1130 to 1159 (PIHGIYIHVFVFLGCMIGLTLFVGVVIANF) form a helical membrane-spanning segment. The Cytoplasmic portion of the chain corresponds to 1160 to 1210 (NENKGTALLTVDQRRWEDLKSRLKIAQPLHLPPRPDNDGFRAKMYDITQHP). Residues 1211-1227 (FFKRTIALLVLAQSVLL) traverse the membrane as a helical segment. Topologically, residues 1228 to 1236 (SVKWDVEDP) are extracellular. Residues 1237–1260 (VTVPLATMSVVFTFIFVLEVTMKI) form a helical membrane-spanning segment. The Cytoplasmic portion of the chain corresponds to 1261 to 1271 (IAMSPAGFWQS). A helical transmembrane segment spans residues 1272–1293 (RRNRYDLLVTSLGVVWVVLHFA). The Extracellular portion of the chain corresponds to 1294–1296 (LLN). Residues 1297-1318 (AYTYMMGACVIVFRFFSICGKH) traverse the membrane as a helical; Voltage-sensor segment. At 1319–1331 (VTLKMLLLTVVVS) the chain is on the cytoplasmic side. Residues 1332-1357 (MYKSFFIIVGMFLLLLCYAFAGVVLF) traverse the membrane as a helical segment. Over 1358–1378 (GTVKYGENINRHANFSSAGKA) the chain is Extracellular. The pore-forming intramembrane region spans 1379 to 1398 (ITVLFRIVTGEDWNKIMHDC). The Extracellular portion of the chain corresponds to 1399-1420 (MVQPPFCTPDEFTYWATDCGNY). Cys1405 and Cys1417 are disulfide-bonded. A helical transmembrane segment spans residues 1421–1447 (AGALMYFCSFYVIIAYIMLNLLVAIIV). Residues 1448 to 1738 (ENFSLFYSTE…DESGDDLLDI (291 aa)) are Cytoplasmic-facing. Positions 1611–1678 (PPSIETTQPS…QWRLPSAPKP (68 aa)) are disordered. Residues 1613 to 1632 (SIETTQPSEDTNANSQDNSM) show a composition bias toward polar residues. Residues 1633 to 1648 (QPETSSQQQLLSPTLS) show a composition bias toward low complexity.

Belongs to the NALCN family. In terms of assembly, found in a complex with NALCN, UNC79, UNC80 and NACL1; these auxiliary subunits are indispensable for the function of NALCN channel. Interacts with UNC80; required for the NALCN activation/inhibition by GPCRs in neurons. Found in a complex with NALCN, UNC79 and UNC80; UNC80 bridges NALCN to UNC79. Interacts with CHRM3. Phosphorylated on tyrosine residues.

It localises to the cell membrane. The catalysed reaction is Na(+)(in) = Na(+)(out). Its activity is regulated as follows. Inhibited by low micromolar concentrations of Gd(3+) and high micromolar concentrations of verapamil. Insensitive to tetrodotoxin (TTX) and potentiated by low external Ca(2+) concentration. In terms of biological role, voltage-gated ion channel responsible for the resting Na(+) permeability that controls neuronal excitability. NALCN channel functions as a multi-protein complex, which consists at least of NALCN, NALF1, UNC79 and UNC80. NALCN is the voltage-sensing, pore-forming subunit of the NALCN channel complex. NALCN channel complex is constitutively active and conducts monovalent cations but is blocked by physiological concentrations of extracellular divalent cations. In addition to its role in regulating neuronal excitability, is required for normal respiratory rhythm, systemic osmoregulation by controlling the serum sodium concentration and in the regulation of the intestinal pace-making activity in the interstitial cells of Cajal. NALCN channel is also activated by neuropeptides such as neurotensin and substance P (SP) through a SRC family kinases-dependent pathway. In addition, NALCN activity is enhanced/modulated by several GPCRs, such as CHRM3. The chain is Sodium leak channel NALCN from Homo sapiens (Human).